The chain runs to 385 residues: Transcription termination factor 2, mitochondrial (385 aa).

The transit peptide at 1-35 directs the protein to the mitochondrion; it reads MSWRLLTGYQLCRLRLFRKPQPALKIRPSSVCVTY.

The protein belongs to the mTERF family. Monomer.

The protein localises to the mitochondrion matrix. It is found in the mitochondrion nucleoid. Its function is as follows. Binds mitochondrial DNA and plays a role in the regulation of transcription of mitochondrial mRNA and rRNA species. The sequence is that of Transcription termination factor 2, mitochondrial (Mterf2) from Rattus norvegicus (Rat).